A 1257-amino-acid chain; its full sequence is RAF-like serine/threonine-protein kinase 24 (1257 aa).

A disordered region spans residues 1 to 21; the sequence is MDQAKGYEHVRYTAPDPRDEG. In terms of domain architecture, PB1 spans 191–277; it reads PRDQKLRYVG…EKPRMFLFSS (87 aa). Basic and acidic residues-rich tracts occupy residues 457–480 and 493–502; these read VQDPETSSKEAKMRRDDSFQKVND and KEPKMRRESS. Disordered regions lie at residues 457–629 and 761–789; these read VQDP…RTSQ and SQSEKKNVETNTPEHVSQTETSAKAVPQG. Residue Ser-474 is modified to Phosphoserine. Over residues 533-548 the composition is skewed to low complexity; the sequence is TQTSSSTPDPSSSTLS. Positions 550–576 are enriched in basic and acidic residues; that stretch reads KSLRKSEDHVENNLSAKEPKMRKEHST. Phosphoserine is present on Ser-555. A compositionally biased stretch (low complexity) spans 583–593; sequence SVSSVSSDSMV. The span at 769-782 shows a compositional bias: polar residues; that stretch reads ETNTPEHVSQTETS. Position 777 is a phosphoserine (Ser-777). One can recognise a Protein kinase domain in the interval 974-1239; it reads LEELKELGSG…PEIARRLRTM (266 aa). Residues 980–988 and Lys-1001 each bind ATP; that span reads LGSGTFGTV. Residue Ser-1013 is modified to Phosphoserine. Asp-1102 (proton acceptor) is an active-site residue.

The protein belongs to the protein kinase superfamily. Ser/Thr protein kinase family. In terms of processing, hyperphosphorylated in response to auxin in an ABP1- and TMK1-dependent manner.

The protein localises to the cytoplasm. The enzyme catalyses L-seryl-[protein] + ATP = O-phospho-L-seryl-[protein] + ADP + H(+). It catalyses the reaction L-threonyl-[protein] + ATP = O-phospho-L-threonyl-[protein] + ADP + H(+). Activated by auxin via rapid phosphorylation downstream of ABP1 and TMK1 signaling. RAF-like protein kinase acting, together with RAF20, as a central mediator of a fast response pathway to auxin involving proteins phosphorylation, and leading to rapid cellular responses including membrane depolarization and cytoplasmic streaming. Required for general growth and developmental process. In Arabidopsis thaliana (Mouse-ear cress), this protein is RAF-like serine/threonine-protein kinase 24.